Consider the following 529-residue polypeptide: Transcription activator of gluconeogenesis ERT1 (529 aa).

The tract at residues 1 to 31 (MCTPDENDYKTSTDPDTSANTNHTLEKKKRK) is disordered. Over residues 14-23 (DPDTSANTNH) the composition is skewed to polar residues. A DNA-binding region (zn(2)-C6 fungal-type) is located at residues 40–68 (CVNCSRLHVSCEAKRPCLRCISKGLTATC). Over residues 174–193 (SNSTIGNSSNNSPTGTNTSP) the composition is skewed to low complexity. Residues 174–198 (SNSTIGNSSNNSPTGTNTSPEETEM) form a disordered region. The region spanning 408 to 480 (TLLEYVKFIA…KTLSKVAYRD (73 aa)) is the PAS domain.

It belongs to the ERT1/acuK family.

It localises to the cytoplasm. The protein resides in the nucleus. Transcription factor which regulates nonfermentable carbon utilization. Activator of gluconeogenetic genes like PCK1. Involved in restriction of Ty1 transposition. The protein is Transcription activator of gluconeogenesis ERT1 (ERT1) of Saccharomyces cerevisiae (strain ATCC 204508 / S288c) (Baker's yeast).